The chain runs to 291 residues: D-alanyl-D-alanine carboxypeptidase (291 aa).

An N-terminal signal peptide occupies residues 1-29 (MRLRRAAATVITTGALLAAGTLGATPATA). Ser-64 acts as the Acyl-ester intermediate in catalysis. Catalysis depends on Lys-67, which acts as the Proton acceptor. Ser-125 is a catalytic residue. Position 242 (Lys-242) interacts with substrate.

This sequence belongs to the peptidase S11 family.

It is found in the secreted. The enzyme catalyses Preferential cleavage: (Ac)2-L-Lys-D-Ala-|-D-Ala. Also transpeptidation of peptidyl-alanyl moieties that are N-acyl substituents of D-alanine.. The protein operates within cell wall biogenesis; peptidoglycan biosynthesis. In terms of biological role, removes C-terminal D-alanyl residues from sugar-peptide cell wall precursors. This Streptomyces sp. (strain K15) protein is D-alanyl-D-alanine carboxypeptidase.